Here is a 68-residue protein sequence, read N- to C-terminus: Large ribosomal subunit protein bL32 (68 aa).

This sequence belongs to the bacterial ribosomal protein bL32 family.

In Ruegeria pomeroyi (strain ATCC 700808 / DSM 15171 / DSS-3) (Silicibacter pomeroyi), this protein is Large ribosomal subunit protein bL32.